The primary structure comprises 113 residues: Ribonuclease P protein component (113 aa).

Belongs to the RnpA family. Consists of a catalytic RNA component (M1 or rnpB) and a protein subunit.

The enzyme catalyses Endonucleolytic cleavage of RNA, removing 5'-extranucleotides from tRNA precursor.. Its function is as follows. RNaseP catalyzes the removal of the 5'-leader sequence from pre-tRNA to produce the mature 5'-terminus. It can also cleave other RNA substrates such as 4.5S RNA. The protein component plays an auxiliary but essential role in vivo by binding to the 5'-leader sequence and broadening the substrate specificity of the ribozyme. This is Ribonuclease P protein component from Ligilactobacillus salivarius (strain UCC118) (Lactobacillus salivarius).